The chain runs to 136 residues: Urease subunit beta (136 aa).

Residues 113–136 (NDEYAGVFGDNGAENVNKKGGKRS) form a disordered region.

This sequence belongs to the urease beta subunit family. Heterotrimer of UreA (gamma), UreB (beta) and UreC (alpha) subunits. Three heterotrimers associate to form the active enzyme.

It is found in the cytoplasm. The catalysed reaction is urea + 2 H2O + H(+) = hydrogencarbonate + 2 NH4(+). The protein operates within nitrogen metabolism; urea degradation; CO(2) and NH(3) from urea (urease route): step 1/1. The sequence is that of Urease subunit beta from Staphylococcus aureus (strain USA300).